Consider the following 460-residue polypeptide: Putative movement protein (460 aa).

2 disordered regions span residues 267 to 314 (SGSK…SDFE) and 349 to 460 (RQNQ…PSGL). The segment covering 368-379 (RKSKGISGRRKQ) has biased composition (basic residues).

This sequence belongs to the tobamoviruses movement protein family.

In terms of biological role, suppressor of viral-induced RNA silencing. The protein is Putative movement protein of Crataegus (hawthorn).